Consider the following 195-residue polypeptide: Probable GTP-binding protein EngB (195 aa).

Residues 24 to 195 (ELPEIALAGR…EAWDAILEKL (172 aa)) enclose the EngB-type G domain. GTP contacts are provided by residues 32–39 (GRSNVGKS), 59–63 (GKTQL), 77–80 (DVPG), 144–147 (TKAD), and 176–178 (FSS). 2 residues coordinate Mg(2+): serine 39 and threonine 61.

The protein belongs to the TRAFAC class TrmE-Era-EngA-EngB-Septin-like GTPase superfamily. EngB GTPase family. It depends on Mg(2+) as a cofactor.

Necessary for normal cell division and for the maintenance of normal septation. The chain is Probable GTP-binding protein EngB from Streptococcus pneumoniae (strain P1031).